The chain runs to 337 residues: tRNA N6-adenosine threonylcarbamoyltransferase (337 aa).

Fe cation-binding residues include His111 and His115. Substrate contacts are provided by residues 134–138, Asp167, Gly180, and Asn272; that span reads LVSGG. Fe cation is bound at residue Asp300.

It belongs to the KAE1 / TsaD family. Fe(2+) serves as cofactor.

It is found in the cytoplasm. It catalyses the reaction L-threonylcarbamoyladenylate + adenosine(37) in tRNA = N(6)-L-threonylcarbamoyladenosine(37) in tRNA + AMP + H(+). Required for the formation of a threonylcarbamoyl group on adenosine at position 37 (t(6)A37) in tRNAs that read codons beginning with adenine. Is involved in the transfer of the threonylcarbamoyl moiety of threonylcarbamoyl-AMP (TC-AMP) to the N6 group of A37, together with TsaE and TsaB. TsaD likely plays a direct catalytic role in this reaction. In Salmonella schwarzengrund (strain CVM19633), this protein is tRNA N6-adenosine threonylcarbamoyltransferase.